Reading from the N-terminus, the 286-residue chain is NAD kinase (286 aa).

Asp-74 serves as the catalytic Proton acceptor. Residues 74 to 75 (DG), 148 to 149 (ND), Asp-178, Ala-186, 189 to 194 (TAYNLS), and Gln-244 contribute to the NAD(+) site.

Belongs to the NAD kinase family. A divalent metal cation serves as cofactor.

It localises to the cytoplasm. The enzyme catalyses NAD(+) + ATP = ADP + NADP(+) + H(+). Involved in the regulation of the intracellular balance of NAD and NADP, and is a key enzyme in the biosynthesis of NADP. Catalyzes specifically the phosphorylation on 2'-hydroxyl of the adenosine moiety of NAD to yield NADP. The polypeptide is NAD kinase (Campylobacter jejuni subsp. jejuni serotype O:23/36 (strain 81-176)).